A 210-amino-acid chain; its full sequence is MGSRWQMEKKHDPYYKKAKKEDYRSRASYKIKQLDKKFKLIKEGDTVVDLGAAPGGWSQVALEKVGEEGLVIGVDLNRIKPFPEENFHGIRGDFTTTEVQEKVMNLIGGKAKVVISDASPSLCGIKNIDQLRSIDLTNTVIGIADNILEPKGNLVMKVFQGPEYKDMLTRLKKKYRQVKTTKPPSSRKKSSEMYVVGLDFKPKKNKKSKD.

Residues G55, W57, D75, D93, and D117 each coordinate S-adenosyl-L-methionine. K157 (proton acceptor) is an active-site residue. The segment at 175-210 (YRQVKTTKPPSSRKKSSEMYVVGLDFKPKKNKKSKD) is disordered.

The protein belongs to the class I-like SAM-binding methyltransferase superfamily. RNA methyltransferase RlmE family.

The protein localises to the cytoplasm. The catalysed reaction is uridine(2552) in 23S rRNA + S-adenosyl-L-methionine = 2'-O-methyluridine(2552) in 23S rRNA + S-adenosyl-L-homocysteine + H(+). Functionally, specifically methylates the uridine in position 2552 of 23S rRNA at the 2'-O position of the ribose in the fully assembled 50S ribosomal subunit. In Methanobrevibacter smithii (strain ATCC 35061 / DSM 861 / OCM 144 / PS), this protein is Ribosomal RNA large subunit methyltransferase E.